A 300-amino-acid chain; its full sequence is Formyltetrahydrofolate deformylase (300 aa).

Residues 21 to 102 (RLLVSCPDQP…MTWSLTLASE (82 aa)) enclose the ACT domain. Aspartate 244 is an active-site residue.

The protein belongs to the PurU family.

It carries out the reaction (6R)-10-formyltetrahydrofolate + H2O = (6S)-5,6,7,8-tetrahydrofolate + formate + H(+). Its pathway is purine metabolism; IMP biosynthesis via de novo pathway; formate from 10-formyl-5,6,7,8-tetrahydrofolate: step 1/1. In terms of biological role, catalyzes the hydrolysis of 10-formyltetrahydrofolate (formyl-FH4) to formate and tetrahydrofolate (FH4). In Bacillus subtilis (strain 168), this protein is Formyltetrahydrofolate deformylase.